The primary structure comprises 449 residues: Probable protoheme IX farnesyltransferase, mitochondrial (449 aa).

The segment covering 99-138 (TTSTTTTTNINENNIKNENNNENNNENSNNNNEQSIKSNQ) has biased composition (low complexity). The tract at residues 99 to 140 (TTSTTTTTNINENNIKNENNNENNNENSNNNNEQSIKSNQTK) is disordered. Transmembrane regions (helical) follow at residues 163–183 (LTAI…WVVL), 245–267 (MAVT…LYCW), 279–299 (TWIG…AATG), 303–323 (AIGM…FLAL), 352–372 (SLAH…FFNF), 374–394 (VHPI…LPFI), and 402–422 (LYII…LLRQ).

It belongs to the UbiA prenyltransferase family.

It is found in the mitochondrion membrane. In terms of biological role, converts protoheme IX and farnesyl diphosphate to heme O. This is Probable protoheme IX farnesyltransferase, mitochondrial (cox10) from Dictyostelium discoideum (Social amoeba).